The primary structure comprises 509 residues: Ribonuclease Y (509 aa).

A helical transmembrane segment spans residues 1-21 (MIILVAVVTAVISFGLGYVVA). The region spanning 199 to 259 (TVSTVSLPSD…IRREIARLTL (61 aa)) is the KH domain. The HD domain maps to 325 to 418 (VLDHSIEVAQ…VAAADALSAA (94 aa)).

Belongs to the RNase Y family.

The protein resides in the cell membrane. Functionally, endoribonuclease that initiates mRNA decay. This chain is Ribonuclease Y, found in Pseudothermotoga lettingae (strain ATCC BAA-301 / DSM 14385 / NBRC 107922 / TMO) (Thermotoga lettingae).